We begin with the raw amino-acid sequence, 560 residues long: Beta-hexosaminidase subunit B1 (560 aa).

A signal peptide spans 1 to 25; that stretch reads MIILKRNIVFLLIIIIVLGIFIATS. 7 N-linked (GlcNAc...) asparagine glycosylation sites follow: Asn-59, Asn-69, Asn-81, Asn-99, Asn-161, Asn-293, and Asn-346. Glu-359 serves as the catalytic Proton donor. 4 N-linked (GlcNAc...) asparagine glycosylation sites follow: Asn-366, Asn-436, Asn-472, and Asn-547.

It belongs to the glycosyl hydrolase 20 family.

It is found in the lysosome. The enzyme catalyses Hydrolysis of terminal non-reducing N-acetyl-D-hexosamine residues in N-acetyl-beta-D-hexosaminides.. Responsible for the degradation of GM2 gangliosides, and a variety of other molecules containing terminal N-acetyl hexosamines. This chain is Beta-hexosaminidase subunit B1 (hexb1), found in Dictyostelium discoideum (Social amoeba).